The sequence spans 405 residues: mRNA cap guanine-N(7) methyltransferase (405 aa).

Residues 1 to 78 (MDNILNPEDN…PRLEEGHGSL (78 aa)) form a disordered region. Composition is skewed to polar residues over residues 9–18 (DNVSQTNTET) and 36–45 (KFTASGQNLD). Over residues 58 to 75 (KAGEPESPSKRPRLEEGH) the composition is skewed to basic and acidic residues. The region spanning 97 to 404 (SRIFHLRNFN…IYLLFAFEKQ (308 aa)) is the mRNA cap 0 methyltransferase domain. 106–107 (NN) lines the mRNA pocket. Positions 110, 134, 156, 190, 213, and 218 each coordinate S-adenosyl-L-methionine.

This sequence belongs to the class I-like SAM-binding methyltransferase superfamily. mRNA cap 0 methyltransferase family.

Its subcellular location is the nucleus. The catalysed reaction is a 5'-end (5'-triphosphoguanosine)-ribonucleoside in mRNA + S-adenosyl-L-methionine = a 5'-end (N(7)-methyl 5'-triphosphoguanosine)-ribonucleoside in mRNA + S-adenosyl-L-homocysteine. Functionally, catalytic subunit of the mRNA-capping methyltransferase RNMT:RAMAC complex that methylates the N7 position of the added guanosine to the 5'-cap structure of mRNAs. Binds RNA containing 5'-terminal GpppC. This Xenopus tropicalis (Western clawed frog) protein is mRNA cap guanine-N(7) methyltransferase (rnmt).